Consider the following 782-residue polypeptide: Phosphate transporter PHO1 (782 aa).

Residues methionine 1–threonine 386 lie on the Cytoplasmic side of the membrane. One can recognise an SPX domain in the interval valine 2–lysine 334. The segment at lysine 165 to threonine 202 is disordered. Positions serine 170 to serine 188 are enriched in low complexity. Residues lysine 315–lysine 322 are important for inositol polyphosphate binding. The chain crosses the membrane as a helical span at residues phenylalanine 387 to alanine 407. Topologically, residues histidine 408 to glutamate 423 are lumenal. A helical transmembrane segment spans residues threonine 424–cysteine 444. Residues asparagine 445 to alanine 473 are Cytoplasmic-facing. The chain crosses the membrane as a helical span at residues phenylalanine 474–leucine 494. Residues arginine 495–threonine 506 are Lumenal-facing. A helical membrane pass occupies residues isoleucine 507–tyrosine 527. Residues arginine 528–glycine 593 are Cytoplasmic-facing. Positions lysine 591–glycine 782 constitute an EXS domain. Residues arginine 594 to glutamine 614 form a helical membrane-spanning segment. At cysteine 615–tryptophan 619 the chain is on the lumenal side. A helical transmembrane segment spans residues tryptophan 620 to valine 639. Topologically, residues alanine 640–glycine 782 are cytoplasmic.

This sequence belongs to the SYG1 (TC 2.A.94) family. As to quaternary structure, interacts with PHO2. Post-translationally, PHO1 degradation is PHO2 dependent and involves multivesicular body-mediated vacuolar proteolysis. Predominantly in roots, but also weak expression in the lower part of the hypocotyl. In the stellar cells, including the pericycle and xylem parenchyma cells, but not in the cortical or epidermal cells. Expressed in guard cells.

The protein localises to the golgi apparatus membrane. It localises to the golgi apparatus. Its subcellular location is the trans-Golgi network membrane. It is found in the endoplasmic reticulum membrane. Its function is as follows. Inositol polyphosphate sensor that associates with transcription factors to regulate inorganic phosphate (Pi) starvation responses. Probably acts by binding inositol polyphosphate via its SPX domain. Acts as a Pi exporter, mediating efflux of Pi out of cells. Transfers Pi from the epidermal and cortical cells to the root xylem vessels. Involved in the transfer of Pi from roots to shoots. Involved in abscisic acid (ABA) induction of stomatal closure and ABA repression of stomatal opening. This is Phosphate transporter PHO1 from Arabidopsis thaliana (Mouse-ear cress).